The sequence spans 105 residues: Transmembrane protein 273 (105 aa).

Residues 1–19 form the signal peptide; the sequence is MNLGVSMLRILFLLDVGGA. Topologically, residues 20–38 are extracellular; sequence QVLATGKTPGAEIDFKYAL. Residues 39-59 traverse the membrane as a helical segment; the sequence is IGTAVGVAISAGFLALKICMI. Over 60-105 the chain is Cytoplasmic; the sequence is RRHLFDDDSSDLKSTPGGLSDTIPLKKRAPRRNHNFSKRDAQVIEL.

The protein resides in the membrane. The chain is Transmembrane protein 273 from Homo sapiens (Human).